The chain runs to 117 residues: UPF0251 protein DET0218 (117 aa).

This sequence belongs to the UPF0251 family.

In Dehalococcoides mccartyi (strain ATCC BAA-2266 / KCTC 15142 / 195) (Dehalococcoides ethenogenes (strain 195)), this protein is UPF0251 protein DET0218.